A 399-amino-acid polypeptide reads, in one-letter code: Bombesin receptor subtype-3 (399 aa).

Over 1–41 (MAQRQPHSPNQTLISITNDTESSSSVVSNDNTNKGWSGDNS) the chain is Extracellular. 2 N-linked (GlcNAc...) asparagine glycosylation sites follow: N10 and N18. The helical transmembrane segment at 42-63 (PGIEALCAIYITYAVIISVGIL) threads the bilayer. At 64–82 (GNAILIKVFFKTKSMQTVP) the chain is on the cytoplasmic side. The helical transmembrane segment at 83–103 (NIFITSLAFGDLLLLLTCVPV) threads the bilayer. Residues 104-121 (DATHYLAEGWLFGRIGCK) lie on the Extracellular side of the membrane. C120 and C203 are disulfide-bonded. Residues 122–143 (VLSFIRLTSVGVSVFTLTILSA) traverse the membrane as a helical segment. The Cytoplasmic segment spans residues 144–163 (DRYKAVVKPLERQPSNAILK). A helical transmembrane segment spans residues 164–184 (TCVKAGCVWIVSMIFALPEAI). Residues 185–220 (FSNVYTFRDPNKNMTFESCTSYPVSKKLLQEIHSLL) lie on the Extracellular side of the membrane. Residues 221–241 (CFLVFYIIPLSIISVYYSLIA) traverse the membrane as a helical segment. Over 242 to 272 (RTLYKSTLNIPTEEQSHARKQIESRKRIART) the chain is Cytoplasmic. A helical membrane pass occupies residues 273–293 (VLVLVALFALCWLPNHLLYLY). The Extracellular portion of the chain corresponds to 294 to 313 (HSFTSQTYVDPSAMHFIFTI). Residues 314 to 333 (FSRVLAFSNSCVNPFALYWL) traverse the membrane as a helical segment. Residues 334 to 399 (SKSFQKHFKA…CSVKQAEDRF (66 aa)) lie on the Cytoplasmic side of the membrane. C347 is lipidated: S-palmitoyl cysteine.

Belongs to the G-protein coupled receptor 1 family. In terms of assembly, interacts with C6orf89. In terms of tissue distribution, in germ cells in testis. Lung carcinoma cells.

The protein localises to the cell membrane. Functionally, role in sperm cell division, maturation, or function. This receptor mediates its action by association with G proteins that activate a phosphatidylinositol-calcium second messenger system. This is Bombesin receptor subtype-3 (BRS3) from Homo sapiens (Human).